A 2957-amino-acid chain; its full sequence is Toxin PAU_02230 (2957 aa).

Residues 949–968 (TSVSPAETAQSTPEPLSDFA) form a disordered region. The tract at residues 2115 to 2144 (EWFKHSETGLKGGGPIDDIRKYIARKSAIK) is membrane localization domain that interacts with the inner leaflet of the plasma membrane. The tract at residues 2115–2449 (EWFKHSETGL…TSTIVTPLAP (335 aa)) is tyrosine glycosyltransferase PaToxG. UDP-N-acetyl-alpha-D-glucosamine contacts are provided by residues 2169-2171 (IWI) and 2259-2260 (SD). 2 residues coordinate a divalent metal cation: Asp2276 and Asp2278. The DxDD motif signature appears at 2276 to 2279 (DIDD). Residue Asn2312 participates in UDP-N-acetyl-alpha-D-glucosamine binding. Residues 2450–2672 (KTEMLPPVPS…NYSVNPTAEN (223 aa)) form a sseI-like deamidase PaToxD region. Residues Cys2509, His2547, and Asp2562 each act as for deamidase activity in the active site. The tract at residues 2667–2705 (NPTAENLSPPPPPPIPSHGQVPKTVTPPPPPMRSPLSLS) is disordered.

A divalent metal cation serves as cofactor.

The protein localises to the secreted. The protein resides in the host cell membrane. The enzyme catalyses L-tyrosyl-[protein] + UDP-N-acetyl-alpha-D-glucosamine = O-(N-acetyl-alpha-D-glucosaminyl)-L-tyrosyl-[protein] + UDP + H(+). The catalysed reaction is L-glutaminyl-[protein] + H2O = L-glutamyl-[protein] + NH4(+). In terms of biological role, toxin that acts on host cells by modifying Rho proteins by tyrosine GlcNAcylation and heterotrimeric G alpha proteins by deamidation. Catalyzes the mono-O-GlcNAcylation of small GTPases of the Rho family (RhoA, RhoB, RhoC, Rac1, Rac2, Rac3, Cdc42) in eukaryotic host cells at the conserved tyrosine residue located in the switch I region (Tyr-32/34), using UDP-N-acetylglucosamine (UDP-GlcNAc) as the sugar donor; other GTPases of the Rho, Ras or Rab families are not substrates. Tyrosine glycosylation inhibits Rho activation and prevents interaction with downstream effectors, resulting in actin disassembly, inhibition of phagocytosis, cell rounding, and toxicity toward insects and mammalian cells. Also catalyzes the deamidation of the catalytic glutamine in heterotrimeric G alpha proteins (Gi, Gq/11), which blocks GTP hydrolysis and arrests the G proteins in a permanent active state leading to activation of Rho GTPases. Thus, PaTox hijacks host GTPase signaling in a bidirectional manner by deamidation-induced activation and glycosylation-induced inactivation of GTPases. The protein is Toxin PAU_02230 of Photorhabdus asymbiotica subsp. asymbiotica (strain ATCC 43949 / 3105-77) (Xenorhabdus luminescens (strain 2)).